The primary structure comprises 353 residues: Photosystem II protein D1 (353 aa).

At T2 the chain carries N-acetylthreonine. T2 is modified (phosphothreonine). 3 helical membrane-spanning segments follow: residues Y29–S46, H118–L133, and W142–A156. H118 is a binding site for chlorophyll a. Y126 contributes to the pheophytin a binding site. D170 and E189 together coordinate [CaMn4O5] cluster. Residues F197–L218 traverse the membrane as a helical segment. H198 is a binding site for chlorophyll a. Residues H215 and S264–F265 each bind a quinone. H215 contributes to the Fe cation binding site. H272 is a binding site for Fe cation. A helical transmembrane segment spans residues F274–L288. [CaMn4O5] cluster-binding residues include H332, E333, D342, and A344. A propeptide spanning residues S345–G353 is cleaved from the precursor.

It belongs to the reaction center PufL/M/PsbA/D family. PSII is composed of 1 copy each of membrane proteins PsbA, PsbB, PsbC, PsbD, PsbE, PsbF, PsbH, PsbI, PsbJ, PsbK, PsbL, PsbM, PsbT, PsbX, PsbY, PsbZ, Psb30/Ycf12, at least 3 peripheral proteins of the oxygen-evolving complex and a large number of cofactors. It forms dimeric complexes. The D1/D2 heterodimer binds P680, chlorophylls that are the primary electron donor of PSII, and subsequent electron acceptors. It shares a non-heme iron and each subunit binds pheophytin, quinone, additional chlorophylls, carotenoids and lipids. D1 provides most of the ligands for the Mn4-Ca-O5 cluster of the oxygen-evolving complex (OEC). There is also a Cl(-1) ion associated with D1 and D2, which is required for oxygen evolution. The PSII complex binds additional chlorophylls, carotenoids and specific lipids. is required as a cofactor. Post-translationally, tyr-161 forms a radical intermediate that is referred to as redox-active TyrZ, YZ or Y-Z. In terms of processing, C-terminally processed by CTPA; processing is essential to allow assembly of the oxygen-evolving complex and thus photosynthetic growth.

The protein resides in the plastid. It localises to the chloroplast thylakoid membrane. The catalysed reaction is 2 a plastoquinone + 4 hnu + 2 H2O = 2 a plastoquinol + O2. Functionally, photosystem II (PSII) is a light-driven water:plastoquinone oxidoreductase that uses light energy to abstract electrons from H(2)O, generating O(2) and a proton gradient subsequently used for ATP formation. It consists of a core antenna complex that captures photons, and an electron transfer chain that converts photonic excitation into a charge separation. The D1/D2 (PsbA/PsbD) reaction center heterodimer binds P680, the primary electron donor of PSII as well as several subsequent electron acceptors. This chain is Photosystem II protein D1, found in Nephroselmis olivacea (Green alga).